The chain runs to 361 residues: Serine/threonine-protein kinase SRK2B (361 aa).

Positions 4 to 260 (YELVKDIGAG…IGDIKKHPWF (257 aa)) constitute a Protein kinase domain. ATP-binding positions include 10–18 (IGAGNFGVA) and Lys33. The active-site Proton acceptor is Asp123. Position 154 is a phosphoserine (Ser154). The interval 311-361 (AFGWGGGEDAEGKEEDAEEEVEEVEEEEDEEDEYDKTVKQVHASMGEVRVS) is disordered. Positions 318 to 344 (EDAEGKEEDAEEEVEEVEEEEDEEDEY) are enriched in acidic residues.

This sequence belongs to the protein kinase superfamily. Ser/Thr protein kinase family. In terms of tissue distribution, expressed in seedlings.

It catalyses the reaction L-seryl-[protein] + ATP = O-phospho-L-seryl-[protein] + ADP + H(+). The enzyme catalyses L-threonyl-[protein] + ATP = O-phospho-L-threonyl-[protein] + ADP + H(+). In Arabidopsis thaliana (Mouse-ear cress), this protein is Serine/threonine-protein kinase SRK2B (SRK2B).